A 213-amino-acid chain; its full sequence is Large ribosomal subunit protein mL67 (213 aa).

This sequence belongs to the mitochondrion-specific ribosomal protein mL67 family.

Its subcellular location is the nucleus. It localises to the mitochondrion. Its function is as follows. Transcription factor involved in regulation of RNA polymerase II-dependent transcription. Also involved in regulation of mitochondrial DNA recombination, maintenance and repair, and generation of homoplasmic cells. The protein is Large ribosomal subunit protein mL67 (MHR1) of Eremothecium gossypii (strain ATCC 10895 / CBS 109.51 / FGSC 9923 / NRRL Y-1056) (Yeast).